The primary structure comprises 206 residues: N-(5'-phosphoribosyl)anthranilate isomerase (206 aa).

It belongs to the TrpF family.

It carries out the reaction N-(5-phospho-beta-D-ribosyl)anthranilate = 1-(2-carboxyphenylamino)-1-deoxy-D-ribulose 5-phosphate. The protein operates within amino-acid biosynthesis; L-tryptophan biosynthesis; L-tryptophan from chorismate: step 3/5. This Pseudomonas putida (strain GB-1) protein is N-(5'-phosphoribosyl)anthranilate isomerase.